Consider the following 218-residue polypeptide: UPF0502 protein Shewana3_1622 (218 aa).

Belongs to the UPF0502 family.

The sequence is that of UPF0502 protein Shewana3_1622 from Shewanella sp. (strain ANA-3).